A 269-amino-acid polypeptide reads, in one-letter code: MTPLKIAIAGANGRMGRVLVEAVNNHPDTVLSGALEHSGSEALGLDAGYAVGLKTGIAISDDVDAVLAQSDVLIDFTRPEPTLKHLQKCVEKQVNIIIGTTGFDDTGKAAIHTAAEKTGIVFAANFSVGVNLTFHILDTVARVLNEGYDIEIIEGHHRHKVDAPSGTALRMGEVIAGALGRDLKQCAVYGREGHTGPRDPSTIGFATVRAGDIVGDHTALFATDGERVEITHKASSRMTFAAGAVRAAVWVNGKTGLYDMQDVLGLNNR.

Residues Gly-10–Met-15, Glu-36, Gly-99–Thr-101, and Ala-123–Phe-126 contribute to the NAD(+) site. The active-site Proton donor/acceptor is the His-156. Position 157 (His-157) interacts with (S)-2,3,4,5-tetrahydrodipicolinate. Lys-160 serves as the catalytic Proton donor. Gly-166–Thr-167 lines the (S)-2,3,4,5-tetrahydrodipicolinate pocket.

The protein belongs to the DapB family.

It is found in the cytoplasm. It carries out the reaction (S)-2,3,4,5-tetrahydrodipicolinate + NAD(+) + H2O = (2S,4S)-4-hydroxy-2,3,4,5-tetrahydrodipicolinate + NADH + H(+). The catalysed reaction is (S)-2,3,4,5-tetrahydrodipicolinate + NADP(+) + H2O = (2S,4S)-4-hydroxy-2,3,4,5-tetrahydrodipicolinate + NADPH + H(+). Its pathway is amino-acid biosynthesis; L-lysine biosynthesis via DAP pathway; (S)-tetrahydrodipicolinate from L-aspartate: step 4/4. Functionally, catalyzes the conversion of 4-hydroxy-tetrahydrodipicolinate (HTPA) to tetrahydrodipicolinate. The chain is 4-hydroxy-tetrahydrodipicolinate reductase from Neisseria meningitidis serogroup B (strain ATCC BAA-335 / MC58).